The chain runs to 289 residues: MYG1 protein TC_0665 (289 aa).

This sequence belongs to the MYG1 family.

This Chlamydia muridarum (strain MoPn / Nigg) protein is MYG1 protein TC_0665.